The chain runs to 377 residues: D-alanine--D-alanine ligase (377 aa).

Residues 141–347 form the ATP-grasp domain; it reads KRILNQAGIR…YSELIDRLIQ (207 aa). 171–226 provides a ligand contact to ATP; sequence KEELGDLVFVKPAKQGSSVGIHKVDTEEEYETAMKDAFTYDYKVLVEAGIKNPREI. Residues D301, E314, and N316 each coordinate Mg(2+).

The protein belongs to the D-alanine--D-alanine ligase family. Mg(2+) serves as cofactor. The cofactor is Mn(2+).

The protein localises to the cytoplasm. It catalyses the reaction 2 D-alanine + ATP = D-alanyl-D-alanine + ADP + phosphate + H(+). It participates in cell wall biogenesis; peptidoglycan biosynthesis. In terms of biological role, cell wall formation. The sequence is that of D-alanine--D-alanine ligase from Limosilactobacillus fermentum (strain NBRC 3956 / LMG 18251) (Lactobacillus fermentum).